The primary structure comprises 152 residues: Putative toxin MJ1304 (152 aa).

An HEPN domain is found at 15 to 135; that stretch reads IKRAEEDLEV…EECLKDAENV (121 aa).

Putative toxin component of a putative type VII toxin-antitoxin (TA) system. Its cognate antitoxin might be MJ1305. The protein is Putative toxin MJ1304 of Methanocaldococcus jannaschii (strain ATCC 43067 / DSM 2661 / JAL-1 / JCM 10045 / NBRC 100440) (Methanococcus jannaschii).